The chain runs to 712 residues: 1,4-alpha-glucan branching enzyme GlgB (712 aa).

The active-site Nucleophile is the D397. E450 functions as the Proton donor in the catalytic mechanism.

This sequence belongs to the glycosyl hydrolase 13 family. GlgB subfamily. In terms of assembly, monomer.

It carries out the reaction Transfers a segment of a (1-&gt;4)-alpha-D-glucan chain to a primary hydroxy group in a similar glucan chain.. It functions in the pathway glycan biosynthesis; glycogen biosynthesis. Its function is as follows. Catalyzes the formation of the alpha-1,6-glucosidic linkages in glycogen by scission of a 1,4-alpha-linked oligosaccharide from growing alpha-1,4-glucan chains and the subsequent attachment of the oligosaccharide to the alpha-1,6 position. In Bradyrhizobium sp. (strain ORS 278), this protein is 1,4-alpha-glucan branching enzyme GlgB.